Consider the following 368-residue polypeptide: Phosphoribosylformylglycinamidine cyclo-ligase (368 aa).

The protein belongs to the AIR synthase family.

The protein localises to the cytoplasm. It catalyses the reaction 2-formamido-N(1)-(5-O-phospho-beta-D-ribosyl)acetamidine + ATP = 5-amino-1-(5-phospho-beta-D-ribosyl)imidazole + ADP + phosphate + H(+). It participates in purine metabolism; IMP biosynthesis via de novo pathway; 5-amino-1-(5-phospho-D-ribosyl)imidazole from N(2)-formyl-N(1)-(5-phospho-D-ribosyl)glycinamide: step 2/2. This chain is Phosphoribosylformylglycinamidine cyclo-ligase, found in Chelativorans sp. (strain BNC1).